The primary structure comprises 122 residues: Large ribosomal subunit protein uL14 (122 aa).

The protein belongs to the universal ribosomal protein uL14 family. As to quaternary structure, part of the 50S ribosomal subunit. Forms a cluster with proteins L3 and L19. In the 70S ribosome, L14 and L19 interact and together make contacts with the 16S rRNA in bridges B5 and B8.

Functionally, binds to 23S rRNA. Forms part of two intersubunit bridges in the 70S ribosome. This chain is Large ribosomal subunit protein uL14, found in Bacillus cytotoxicus (strain DSM 22905 / CIP 110041 / 391-98 / NVH 391-98).